The following is a 114-amino-acid chain: Ribonuclease P protein component (114 aa).

This sequence belongs to the RnpA family. In terms of assembly, consists of a catalytic RNA component (M1 or rnpB) and a protein subunit.

The enzyme catalyses Endonucleolytic cleavage of RNA, removing 5'-extranucleotides from tRNA precursor.. RNaseP catalyzes the removal of the 5'-leader sequence from pre-tRNA to produce the mature 5'-terminus. It can also cleave other RNA substrates such as 4.5S RNA. The protein component plays an auxiliary but essential role in vivo by binding to the 5'-leader sequence and broadening the substrate specificity of the ribozyme. This chain is Ribonuclease P protein component, found in Legionella pneumophila (strain Lens).